We begin with the raw amino-acid sequence, 380 residues long: MSDSPIKYRLIKKEKHTGARLGEIITPHGTFPTPMFMPVGTQATVKTQSPEELKEMGSGIILSNTYHLWLRPGDELIARAGGLHKFMNWDQPILTDSGGFQVYSLADSRNITEEGVTFKNHLNGSKMFLSPEKAISIQNNLGSDIMMSFDECPQFYQPYDYVKKSIERTSRWAERGLKAHRRPHDQGLFGIVQGAGFEDLRRQSAHDLVSMDFSGYSIGGLAVGETHEEMNAVLDFTTQLLPENKPRYLMGVGAPDSLIDGVIRGVDMFDCVLPTRIARNGTCMTSQGRLVVKNAQFAEDFTPLDPECDCYTCNNYTRAYLRHLLKADETFGIRLTSYHNLYFLLNLMKQVRQAIMDDNLLEFREYFVEKYGYNKSGRNF.

Asp96 (proton acceptor) is an active-site residue. Residues 96-100 (DSGGF), Asp150, Gln193, and Gly220 each bind substrate. The tract at residues 251-257 (GVGAPDS) is RNA binding. The active-site Nucleophile is Asp270. An RNA binding; important for wobble base 34 recognition region spans residues 275 to 279 (TRIAR). The Zn(2+) site is built by Cys308, Cys310, Cys313, and His339.

The protein belongs to the queuine tRNA-ribosyltransferase family. In terms of assembly, homodimer. Within each dimer, one monomer is responsible for RNA recognition and catalysis, while the other monomer binds to the replacement base PreQ1. Zn(2+) serves as cofactor.

It carries out the reaction 7-aminomethyl-7-carbaguanine + guanosine(34) in tRNA = 7-aminomethyl-7-carbaguanosine(34) in tRNA + guanine. The protein operates within tRNA modification; tRNA-queuosine biosynthesis. In terms of biological role, catalyzes the base-exchange of a guanine (G) residue with the queuine precursor 7-aminomethyl-7-deazaguanine (PreQ1) at position 34 (anticodon wobble position) in tRNAs with GU(N) anticodons (tRNA-Asp, -Asn, -His and -Tyr). Catalysis occurs through a double-displacement mechanism. The nucleophile active site attacks the C1' of nucleotide 34 to detach the guanine base from the RNA, forming a covalent enzyme-RNA intermediate. The proton acceptor active site deprotonates the incoming PreQ1, allowing a nucleophilic attack on the C1' of the ribose to form the product. After dissociation, two additional enzymatic reactions on the tRNA convert PreQ1 to queuine (Q), resulting in the hypermodified nucleoside queuosine (7-(((4,5-cis-dihydroxy-2-cyclopenten-1-yl)amino)methyl)-7-deazaguanosine). This is Queuine tRNA-ribosyltransferase from Streptococcus pneumoniae (strain ATCC BAA-255 / R6).